The chain runs to 610 residues: Chitinase 63 (610 aa).

A signal peptide spans 1-30; sequence MRFRHKAAALAATLALPLAGLVGLASPAQA. Residues 31 to 134 form the CBM2 domain; that stretch reads ATSATATFQK…KINGGSCDGS (104 aa). Disordered stretches follow at residues 125 to 153 and 208 to 239; these read KING…ASNI and ARDT…PNPG. The Fibronectin type-III domain maps to 144 to 229; sequence APGTPTASNI…GSVKVTTTGG (86 aa). Positions 213-224 are enriched in polar residues; that stretch reads DQTGPASGSVKV. The GH18 domain maps to 241 to 610; sequence EVKMGYFTNW…LVSAIDSGLK (370 aa). Chitin-binding positions include 313-314 and 340-343; these read DQ and GGWT. Residue Glu383 is the Proton donor of the active site. Chitin is bound by residues Tyr384, 450 to 453, and Trp590; that span reads MTYD.

This sequence belongs to the glycosyl hydrolase 18 family. Chitinase class II subfamily.

The catalysed reaction is Random endo-hydrolysis of N-acetyl-beta-D-glucosaminide (1-&gt;4)-beta-linkages in chitin and chitodextrins.. The polypeptide is Chitinase 63 (chtA) (Streptomyces plicatus).